A 139-amino-acid chain; its full sequence is Natriuretic peptides A (139 aa).

The N-terminal stretch at 1–21 is a signal peptide; sequence MTALVLWGLLLLLGQHTQVNS. A propeptide spanning residues 22–114 is cleaved from the precursor; that stretch reads HVLGRPFSAS…QDLLMSLRKR (93 aa). Cysteine 118 and cysteine 134 are disulfide-bonded.

Belongs to the natriuretic peptide family.

The protein resides in the secreted. Functionally, hormone playing a key role in cardiovascular homeostasis through regulation of natriuresis, diuresis, and vasodilation. Has a cGMP-stimulating activity. This Takifugu rubripes (Japanese pufferfish) protein is Natriuretic peptides A (nppa).